Here is a 119-residue protein sequence, read N- to C-terminus: Ribosome-binding factor A (119 aa).

Belongs to the RbfA family. In terms of assembly, monomer. Binds 30S ribosomal subunits, but not 50S ribosomal subunits or 70S ribosomes.

The protein localises to the cytoplasm. Its function is as follows. One of several proteins that assist in the late maturation steps of the functional core of the 30S ribosomal subunit. Associates with free 30S ribosomal subunits (but not with 30S subunits that are part of 70S ribosomes or polysomes). Required for efficient processing of 16S rRNA. May interact with the 5'-terminal helix region of 16S rRNA. The protein is Ribosome-binding factor A of Geobacter sp. (strain M21).